The following is a 512-amino-acid chain: Nephrocan (512 aa).

The first 19 residues, 1–19 (MHPLWAFLLGLSLTNGLSA), serve as a signal peptide directing secretion. An LRRNT domain is found at 20-44 (NCPGRCSCDSMQSVQCYRLMELPSG). LRR repeat units lie at residues 45 to 69 (IPST…NFTG), 71 to 93 (LALE…TFKT), 94 to 117 (LSTL…LPAN), 119 to 138 (EVLK…EFEG), 139 to 162 (LKNL…MLSP), 164 to 185 (ASLQ…PLSL), 186 to 208 (PHLK…VFTS), 210 to 232 (QNLQ…LPKS), 234 to 253 (LSLK…DMKH), 254 to 276 (LENL…AQQL), 277 to 299 (TNLT…LPSR), 301 to 320 (QKLD…EFQD), 321 to 344 (LRDL…ALQR), 346 to 371 (SQLS…TLAR), 373 to 389 (DLKG…ELRD), 390 to 413 (LKQL…ALEG), and 415 to 442 (PRLR…VLKA). Residue Asn66 is glycosylated (N-linked (GlcNAc...) asparagine). A compositionally biased stretch (basic and acidic residues) spans 474–484 (EHHLQQSEKSK). Residues 474-512 (EHHLQQSEKSKETKKKPKPEDSSSIRLNMDDDDDDYEID) are disordered. Residues 503–512 (DDDDDDYEID) are compositionally biased toward acidic residues.

The protein belongs to the small leucine-rich proteoglycan (SLRP) family. Post-translationally, N-glycosylated. As to expression, expressed at highest levels in the kidney, where it is primarily detected in the epithelial cells of distal tubules and collecting ducts, and more weakly in proximal epithelial cells. Expressed at lower levels in heart and lung (at protein level). Detected in skeletal muscle.

The protein resides in the secreted. In terms of biological role, may inhibit TGF-beta signaling. The sequence is that of Nephrocan from Mus musculus (Mouse).